Here is a 393-residue protein sequence, read N- to C-terminus: tRNA(Met) cytidine acetate ligase (393 aa).

The ATP site is built by glycine 81, asparagine 142, and arginine 167.

It belongs to the TmcAL family.

The protein localises to the cytoplasm. It catalyses the reaction cytidine(34) in elongator tRNA(Met) + acetate + ATP = N(4)-acetylcytidine(34) in elongator tRNA(Met) + AMP + diphosphate. Catalyzes the formation of N(4)-acetylcytidine (ac(4)C) at the wobble position of elongator tRNA(Met), using acetate and ATP as substrates. First activates an acetate ion to form acetyladenylate (Ac-AMP) and then transfers the acetyl group to tRNA to form ac(4)C34. The protein is tRNA(Met) cytidine acetate ligase of Bacillus anthracis (strain A0248).